The primary structure comprises 72 residues: UPF0729 protein C18orf32 homolog (72 aa).

The segment at 1-33 (MVCIPCIVIPVLLWIFKKFLEPYIYPVVSRIWP) is necessary for its localzation to the endoplasmic reticulum and lipid droplets. The interval 45-72 (TGKVDCKGADTNGFSTKGPTEVSDKKKD) is disordered.

This sequence belongs to the UPF0729 family. As to quaternary structure, interacts with DERL1 and AMFR. In terms of processing, undergoes ER-associated degradation (ERAD).

The protein localises to the endoplasmic reticulum. It is found in the lipid droplet. In terms of biological role, may activate the NF-kappa-B signaling pathway. The sequence is that of UPF0729 protein C18orf32 homolog from Rattus norvegicus (Rat).